We begin with the raw amino-acid sequence, 386 residues long: Caspase-12 (386 aa).

A CARD domain is found at 1 to 91; the sequence is MAGKRQSQDP…LLSLKSHAEN (91 aa). Ser-84 carries the phosphoserine modification. Active-site residues include His-218 and Cys-266.

The protein belongs to the peptidase C14A family. Heterotetramer that consists of two anti-parallel arranged heterodimers, each one formed by two subunits (Potential). May interact with TRAF2.

Involved in the activation cascade of caspases responsible for apoptosis execution. The polypeptide is Caspase-12 (Canis lupus familiaris (Dog)).